Here is a 163-residue protein sequence, read N- to C-terminus: Cyclic pyranopterin monophosphate synthase (163 aa).

Substrate contacts are provided by residues Leu-75–His-77 and Met-113–Glu-114. The active site involves Asp-128.

It belongs to the MoaC family. As to quaternary structure, homohexamer; trimer of dimers.

It carries out the reaction (8S)-3',8-cyclo-7,8-dihydroguanosine 5'-triphosphate = cyclic pyranopterin phosphate + diphosphate. Its pathway is cofactor biosynthesis; molybdopterin biosynthesis. Functionally, catalyzes the conversion of (8S)-3',8-cyclo-7,8-dihydroguanosine 5'-triphosphate to cyclic pyranopterin monophosphate (cPMP). The chain is Cyclic pyranopterin monophosphate synthase from Jannaschia sp. (strain CCS1).